Consider the following 242-residue polypeptide: Ribonuclease PH (242 aa).

Phosphate contacts are provided by residues Arg-89 and 127 to 129 (GTR).

This sequence belongs to the RNase PH family. Homohexameric ring arranged as a trimer of dimers.

The catalysed reaction is tRNA(n+1) + phosphate = tRNA(n) + a ribonucleoside 5'-diphosphate. Phosphorolytic 3'-5' exoribonuclease that plays an important role in tRNA 3'-end maturation. Removes nucleotide residues following the 3'-CCA terminus of tRNAs; can also add nucleotides to the ends of RNA molecules by using nucleoside diphosphates as substrates, but this may not be physiologically important. Probably plays a role in initiation of 16S rRNA degradation (leading to ribosome degradation) during starvation. The sequence is that of Ribonuclease PH from Neisseria gonorrhoeae (strain ATCC 700825 / FA 1090).